Here is a 226-residue protein sequence, read N- to C-terminus: Uridylate kinase (226 aa).

6–10 is an ATP binding site; that stretch reads KISGK. Residue Gly43 coordinates UMP. ATP is bound by residues Gly44 and Arg48. Residues Asp65 and 113–119 contribute to the UMP site; that span reads FQPGQST. Residues Thr139, Asn140, Tyr145, and Asp148 each contribute to the ATP site.

The protein belongs to the UMP kinase family. As to quaternary structure, homohexamer.

Its subcellular location is the cytoplasm. The catalysed reaction is UMP + ATP = UDP + ADP. It functions in the pathway pyrimidine metabolism; CTP biosynthesis via de novo pathway; UDP from UMP (UMPK route): step 1/1. Inhibited by UTP. Its function is as follows. Catalyzes the reversible phosphorylation of UMP to UDP. The chain is Uridylate kinase from Saccharolobus islandicus (strain Y.N.15.51 / Yellowstone #2) (Sulfolobus islandicus).